The primary structure comprises 177 residues: uncharacterized protein (177 aa).

Low complexity-rich tracts occupy residues 78-93 (NNNN…NTNN) and 120-130 (SDVNSNNNNGN). The tract at residues 78-146 (NNNNNNNNTI…NKKLKKDGTN (69 aa)) is disordered. Residues 131 to 146 (HQKKKINKKLKKDGTN) are compositionally biased toward basic residues.

This is an uncharacterized protein from Dictyostelium discoideum (Social amoeba).